The primary structure comprises 640 residues: RNA polymerase II elongation factor ELL2 (640 aa).

Disordered stretches follow at residues 172–202, 290–320, and 343–490; these read AVSD…STIS, KLNP…PQKR, and RVPP…EEDL. Composition is skewed to polar residues over residues 184–202 and 291–318; these read TPMN…STIS and LNPS…SSPQ. The segment covering 360–372 has biased composition (low complexity); that stretch reads AAGLPLPPAAAAI. A compositionally biased stretch (polar residues) spans 391 to 401; it reads IVNSNSNSPST. Residues 457–470 show a composition bias toward basic residues; it reads MSHKKSKKKSKKHK. Over residues 471–490 the composition is skewed to basic and acidic residues; sequence EKDQIKKHDIETIEEKEEDL. Residues serine 503 and serine 580 each carry the phosphoserine modification. Positions 526 to 636 constitute an OCEL domain; sequence PDYLIKYIAI…LIGEFDQQQA (111 aa).

Belongs to the ELL/occludin family. In terms of assembly, component of the super elongation complex (SEC), at least composed of EAF1, EAF2, CDK9, MLLT3/AF9, AFF (AFF1 or AFF4), the P-TEFb complex and ELL (ELL, ELL2 or ELL3). Component of the little elongation complex (LEC), at least composed of ELL (ELL, ELL2 or ELL3), ZC3H8, ICE1 and ICE2. Interacts with AFF4; the interaction is direct and leads to stabilize ELL2 and prevent ELL2 ubiquitination. Interacts with EAF1 and EAF2. Ubiquitinated by SIAH1, leading to its degradation by the proteasome. Interaction with AFF4 stabilizes ELL2 and prevents ELL2 ubiquitination.

The protein resides in the nucleus. Its function is as follows. Elongation factor component of the super elongation complex (SEC), a complex required to increase the catalytic rate of RNA polymerase II transcription by suppressing transient pausing by the polymerase at multiple sites along the DNA. Component of the little elongation complex (LEC), a complex required to regulate small nuclear RNA (snRNA) gene transcription by RNA polymerase II and III. Plays a role in immunoglobulin secretion in plasma cells: directs efficient alternative mRNA processing, influencing both proximal poly(A) site choice and exon skipping, as well as immunoglobulin heavy chain (IgH) alternative processing. Probably acts by regulating histone modifications accompanying transition from membrane-specific to secretory IgH mRNA expression. In Homo sapiens (Human), this protein is RNA polymerase II elongation factor ELL2 (ELL2).